Reading from the N-terminus, the 62-residue chain is HVVAAITALKERGGSSMKKQSVFIKKALKSGVEKGTLVQVKGKGASGSFKLGKKPAAGRTDA.

The 53-residue stretch at 1–53 folds into the H15 domain; the sequence is HVVAAITALKERGGSSMKKQSVFIKKALKSGVEKGTLVQVKGKGASGSFKLGK.

The protein belongs to the histone H1/H5 family.

The protein localises to the nucleus. It is found in the chromosome. Its function is as follows. Histones H1 are necessary for the condensation of nucleosome chains into higher-order structures. The chain is Histone H1.2, embryonic from Parechinus angulosus (Angulate sea urchin).